The following is a 610-amino-acid chain: ESX-5 secretion system protein EccA5 (610 aa).

357–364 lines the ATP pocket; it reads GPPGTGKT.

This sequence belongs to the CbxX/CfxQ family. In terms of assembly, part of the ESX-5 / type VII secretion system (T7SS), which is composed of cytosolic and membrane components.

It is found in the cytoplasm. Part of the ESX-5 specialized secretion system, which is responsible for the secretion of EsxN and a number of PE_PGRS and PPE proteins. EccA5 exhibits ATPase activity and may provide energy for the export of ESX-5 substrates. The polypeptide is ESX-5 secretion system protein EccA5 (Mycobacterium marinum (strain ATCC BAA-535 / M)).